Consider the following 314-residue polypeptide: Malate dehydrogenase (314 aa).

NAD(+)-binding positions include G11–G16 and D35. The substrate site is built by R84 and R90. NAD(+)-binding positions include N97 and I120–N122. N122 and R153 together coordinate substrate. The active-site Proton acceptor is H177.

This sequence belongs to the LDH/MDH superfamily. MDH type 3 family.

The catalysed reaction is (S)-malate + NAD(+) = oxaloacetate + NADH + H(+). Catalyzes the reversible oxidation of malate to oxaloacetate. This chain is Malate dehydrogenase, found in Rickettsia bellii (strain OSU 85-389).